We begin with the raw amino-acid sequence, 1043 residues long: MRENYETLVSVGTSELLPLSAFLSPAEAGGATSGESHQDKGQKPHLEHSSQGEQPQQSLHLTALVQLVKEIPEFLFGEVKGTEDYSESGSTSLDGEQTSPEVAVVVEACPPRGLLNSLPESPASHPSLATTPTGSSTSGGPPGDWAHGSPLPAIGTDDKPLSIEKEGVGASRETSIHSTQSLGQSKSYLRQERGSMGTGTLPENSPLQGLINCLKEILVPRPQHRGTAPDLPPSLPGLSVLKQTRAEVEAGSLPCPVKTEAASGDCPLQGLLNCLKEIPKAPDRRPSPSGASDLQLQEDPGKRHSGGMRHLQTPPHPSHEAGSMLATVKVEDGWAQSPPVPASCQLSRQGYSSYSTGDNREVRVPRWGPMTLASRASSSPLEALEACLKGIPPGGSSPLQSLAISWSRSPQLGDAGSQRFELQQQGSHSEEATREPLLPLSLQGYMREGPGVQPCGSQGTPTSFSSASSSDGDLDFRSPRSSQGQRLGKGYLPGNSPLQGLENCLREIPIPRPQAAWPCSSAVNRGLKRTEPRNWTGDREGLRGEASEPPHLRQRPGEVPSRSLHQDSPQTCTSTCHQVTTRPGTWQWPQEETATMPSPLHRLENSLRGILPVRPLRFTCVTGPGPSPSPCSSSSFSSSDGEDLRPEPAFWQSPLQQKDQPPSCKDPVRLCPVSGASPRVNSNSCSAEDRERTEPRDCSSLSAGRAEEKPHPPRREDGAERTRQPGPVTNAEGKGAAAGHPSPAPQLEEKPEPKGTEDSRDLEPGHRPPSAAARTQGKLLSGDPPESPSKSPLPTTVLSKWSPTSLQPPCPCGRSLQQELHNLGTALTDKLDRLAAALAGLTQEVATMKTQMDQLRRHPRSLGPKGQGSWQLALPQRPRWVNRLGHRHLPYWRQKGPTRPRPKILRTQAEGCKTSDRPGLSRGKGSLVPQLPPEASLVESSRPTCSSSQQISSTPGGHTVLTAHPPLEHTACHQNPLSPSVPTSVQVPLVASPATSADTEPPAARVAAISIPNQPKEPDSLLGEALSRDLWGGDHRDPRWGAH.

The tract at residues 26–56 is disordered; that stretch reads AEAGGATSGESHQDKGQKPHLEHSSQGEQPQ. Over residues 36-50 the composition is skewed to basic and acidic residues; it reads SHQDKGQKPHLEHSS. Ser-99 carries the post-translational modification Phosphoserine. The interval 113-186 is disordered; that stretch reads GLLNSLPESP…HSTQSLGQSK (74 aa). Over residues 126–139 the composition is skewed to low complexity; it reads PSLATTPTGSSTSG. Residues 156 to 167 show a composition bias toward basic and acidic residues; the sequence is TDDKPLSIEKEG. A compositionally biased stretch (polar residues) spans 172 to 186; that stretch reads RETSIHSTQSLGQSK. Ser-181 and Ser-252 each carry phosphoserine. Residues 279–321 form a disordered region; that stretch reads PKAPDRRPSPSGASDLQLQEDPGKRHSGGMRHLQTPPHPSHEA. Ser-352 bears the Phosphoserine mark. Disordered regions lie at residues 413–497, 528–590, and 621–816; these read GDAG…GNSP, KRTE…QWPQ, and VTGP…GRSL. Residues 528-551 show a composition bias toward basic and acidic residues; that stretch reads KRTEPRNWTGDREGLRGEASEPPH. Over residues 566–590 the composition is skewed to polar residues; the sequence is QDSPQTCTSTCHQVTTRPGTWQWPQ. Residues 630–639 show a composition bias toward low complexity; the sequence is PCSSSSFSSS. Composition is skewed to basic and acidic residues over residues 687–697, 705–723, and 747–766; these read AEDRERTEPRD, RAEE…ERTR, and LEEK…EPGH. A compositionally biased stretch (polar residues) spans 788–805; sequence PSKSPLPTTVLSKWSPTS. Residues 825–858 are a coiled coil; that stretch reads TALTDKLDRLAAALAGLTQEVATMKTQMDQLRRH. 2 disordered regions span residues 910–929 and 1010–1043; these read EGCK…SLVP and SIPN…WGAH. Residues 1031–1043 show a composition bias toward basic and acidic residues; that stretch reads WGGDHRDPRWGAH.

The sequence is that of Protein KRBA1 (Krba1) from Mus musculus (Mouse).